Consider the following 235-residue polypeptide: MKQPGEELQETLTELDDRAVVDYLIKNPEFFIRNARAVEAIRVPHPVRGTISLVEWHMARARNHIHVLEENMALLMEQAIANEGLFYRLLYLQRSLTAASSLDDMLMRFHRWARDLGLAGASLRLFPDRWRLGAPSNHTHLALSRQSFEPLRIQRLGQEQHYLGPLNGPELLVVLPEAKAVGSVAMSMLGSDADLGVVLFTSRDASHYQQGQGTQLLHEIALMLPELLERWIERV.

This is an uncharacterized protein from Shigella flexneri.